The chain runs to 537 residues: MFKREEIIEMANKDFEKAWIETKDLIKAKKVNESYPRIKPVFGKTHPVNDTIENLRQAYLRMGFEEYINPVIVDERDIYKQFGPEAMAVLDRCFYLAGLPRPDVGLSDEKISQIEKLGIKVSEHKESLQKILHGYKKGTLDGDDLVLEISNALEISSEMGLKILEEVFPEFKDLTAVSSKLTLRSHMTSGWFLTVSDLMNKKPLPFKLFSIDRCFRREQKEDKSHLMTYHSASCAIAGESVDINDGKAIAEGLLSQFGFTNFKFIPDEKKSKYYTPETQTEVYAYHPKLKEWLEVATFGVYSPVALSKYGIDVPVMNLGLGVERLAMISGNFADVREMVYPQFYEHRLDDRDVASMVKLDKVPVMDEIYDLTKELIDLCVKNKDLKSPCELKLEKTFAFGKTKKNVKISIFEKEEGKNLLGPSILNEIYMYDGNVIGIPESFDGVKEEFKDFLEKGKTEGVSTGIRYIDALCFKITSKLEESFVSNTSEFKVKVPIVRSLSDINLKIDDIALKQIMSKNKVIDVRGPVFLNVEVKIE.

Substrate contacts are provided by residues H186–T188, S231–S233, Y273–Y274, and N317.

Belongs to the class-II aminoacyl-tRNA synthetase family. O-phosphoseryl-tRNA(Cys) synthetase subfamily. As to quaternary structure, homotetramer. Interacts with SepCysS.

The enzyme catalyses tRNA(Cys) + O-phospho-L-serine + ATP = O-phospho-L-seryl-tRNA(Cys) + AMP + diphosphate. Catalyzes the attachment of O-phosphoserine (Sep) to tRNA(Cys). The chain is O-phosphoserine--tRNA(Cys) ligase from Methanococcus maripaludis (strain C6 / ATCC BAA-1332).